The following is a 696-amino-acid chain: DNA ligase (696 aa).

NAD(+)-binding positions include 36 to 40 (DAVYD), 85 to 86 (SL), and Glu-124. Lys-126 (N6-AMP-lysine intermediate) is an active-site residue. NAD(+)-binding residues include Arg-147, Glu-184, Lys-308, and Lys-332. 4 residues coordinate Zn(2+): Cys-426, Cys-429, Cys-444, and Cys-449. Positions 618 to 696 (QRTVSLQGQT…EEELLKLLAS (79 aa)) constitute a BRCT domain.

The protein belongs to the NAD-dependent DNA ligase family. LigA subfamily. It depends on Mg(2+) as a cofactor. The cofactor is Mn(2+).

It carries out the reaction NAD(+) + (deoxyribonucleotide)n-3'-hydroxyl + 5'-phospho-(deoxyribonucleotide)m = (deoxyribonucleotide)n+m + AMP + beta-nicotinamide D-nucleotide.. DNA ligase that catalyzes the formation of phosphodiester linkages between 5'-phosphoryl and 3'-hydroxyl groups in double-stranded DNA using NAD as a coenzyme and as the energy source for the reaction. It is essential for DNA replication and repair of damaged DNA. In Prochlorococcus marinus (strain MIT 9303), this protein is DNA ligase.